A 661-amino-acid polypeptide reads, in one-letter code: Cyclic di-GMP phosphodiesterase PdeR (661 aa).

Positions 109–179 (GLSFAEQVVS…RRNNRVFFRS (71 aa)) constitute a PAS domain. One can recognise a GGDEF domain in the interval 265-397 (NKVGVVYLDL…GRGQFCVFTP (133 aa)). The region spanning 406 to 658 (YLWLDTNLRK…AFERWYKRYL (253 aa)) is the EAL domain.

As to quaternary structure, interacts with DgcM and MlrA.

The catalysed reaction is 3',3'-c-di-GMP + H2O = 5'-phosphoguanylyl(3'-&gt;5')guanosine + H(+). Functionally, part of a signaling cascade that regulates curli biosynthesis. The cascade is composed of two cyclic-di-GMP (c-di-GMP) control modules, in which c-di-GMP controlled by the DgcE/PdeH pair (module I) regulates the activity of the DgcM/PdeR pair (module II), which in turn regulates activity of the transcription factor MlrA and expression of the master biofilm regulator csgD. PdeR acts as a trigger enzyme that connects modules I and II. It inhibits DgcM and MlrA by direct interaction. Inhibition is relieved when PdeR binds and degrades c-di-GMP generated by module I. The chain is Cyclic di-GMP phosphodiesterase PdeR from Escherichia coli (strain K12).